We begin with the raw amino-acid sequence, 364 residues long: UDP-N-acetylglucosamine--N-acetylmuramyl-(pentapeptide) pyrophosphoryl-undecaprenol N-acetylglucosamine transferase (364 aa).

UDP-N-acetyl-alpha-D-glucosamine contacts are provided by residues 10–12, Asn124, Arg165, Ser193, Ile248, and Gln293; that span reads TGG.

Belongs to the glycosyltransferase 28 family. MurG subfamily.

Its subcellular location is the cell inner membrane. The enzyme catalyses di-trans,octa-cis-undecaprenyl diphospho-N-acetyl-alpha-D-muramoyl-L-alanyl-D-glutamyl-meso-2,6-diaminopimeloyl-D-alanyl-D-alanine + UDP-N-acetyl-alpha-D-glucosamine = di-trans,octa-cis-undecaprenyl diphospho-[N-acetyl-alpha-D-glucosaminyl-(1-&gt;4)]-N-acetyl-alpha-D-muramoyl-L-alanyl-D-glutamyl-meso-2,6-diaminopimeloyl-D-alanyl-D-alanine + UDP + H(+). The protein operates within cell wall biogenesis; peptidoglycan biosynthesis. Its function is as follows. Cell wall formation. Catalyzes the transfer of a GlcNAc subunit on undecaprenyl-pyrophosphoryl-MurNAc-pentapeptide (lipid intermediate I) to form undecaprenyl-pyrophosphoryl-MurNAc-(pentapeptide)GlcNAc (lipid intermediate II). The chain is UDP-N-acetylglucosamine--N-acetylmuramyl-(pentapeptide) pyrophosphoryl-undecaprenol N-acetylglucosamine transferase from Geobacter metallireducens (strain ATCC 53774 / DSM 7210 / GS-15).